The primary structure comprises 169 residues: Protein-export protein SecB (169 aa).

This sequence belongs to the SecB family. As to quaternary structure, homotetramer, a dimer of dimers. One homotetramer interacts with 1 SecA dimer.

Its subcellular location is the cytoplasm. One of the proteins required for the normal export of preproteins out of the cell cytoplasm. It is a molecular chaperone that binds to a subset of precursor proteins, maintaining them in a translocation-competent state. It also specifically binds to its receptor SecA. This Mannheimia succiniciproducens (strain KCTC 0769BP / MBEL55E) protein is Protein-export protein SecB.